We begin with the raw amino-acid sequence, 306 residues long: Lipid A biosynthesis lauroyltransferase (306 aa).

Residues tryptophan 17–isoleucine 37 traverse the membrane as a helical segment. The HXXXXD motif signature appears at histidine 132 to glutamate 137.

The protein belongs to the LpxL/LpxM/LpxP family. In terms of assembly, monomer.

It is found in the cell inner membrane. The catalysed reaction is dodecanoyl-[ACP] + alpha-Kdo-(2-&gt;4)-alpha-Kdo-(2-&gt;6)-lipid IVA (E. coli) = alpha-Kdo-(2-&gt;4)-alpha-Kdo-(2-&gt;6)-(dodecanoyl)-lipid IVA (E. coli) + holo-[ACP]. It functions in the pathway glycolipid biosynthesis; KDO(2)-lipid A biosynthesis; KDO(2)-lipid A from CMP-3-deoxy-D-manno-octulosonate and lipid IV(A): step 3/4. It participates in bacterial outer membrane biogenesis; lipopolysaccharide biosynthesis. Functionally, catalyzes the transfer of laurate from lauroyl-[acyl-carrier-protein] (ACP) to Kdo(2)-lipid IV(A) to form Kdo(2)-(lauroyl)-lipid IV(A). Has 10 fold selectivity for lauroyl-ACP over myristoyl-ACP. In vitro, can also catalyze a slow second acylation reaction leading to the formation of Kdo(2)-(dilauroyl)-lipid IV(A). This Escherichia coli (strain K12) protein is Lipid A biosynthesis lauroyltransferase.